Consider the following 264-residue polypeptide: Thymidylate synthase (264 aa).

DUMP is bound at residue arginine 21. Histidine 51 contributes to the (6R)-5,10-methylene-5,6,7,8-tetrahydrofolate binding site. DUMP is bound at residue 126–127 (RR). The active-site Nucleophile is the cysteine 146. DUMP contacts are provided by residues 166 to 169 (RSCD), asparagine 177, and 207 to 209 (HLY). Aspartate 169 contacts (6R)-5,10-methylene-5,6,7,8-tetrahydrofolate. Alanine 263 lines the (6R)-5,10-methylene-5,6,7,8-tetrahydrofolate pocket.

Belongs to the thymidylate synthase family. Bacterial-type ThyA subfamily. In terms of assembly, homodimer.

Its subcellular location is the cytoplasm. The catalysed reaction is dUMP + (6R)-5,10-methylene-5,6,7,8-tetrahydrofolate = 7,8-dihydrofolate + dTMP. It functions in the pathway pyrimidine metabolism; dTTP biosynthesis. Functionally, catalyzes the reductive methylation of 2'-deoxyuridine-5'-monophosphate (dUMP) to 2'-deoxythymidine-5'-monophosphate (dTMP) while utilizing 5,10-methylenetetrahydrofolate (mTHF) as the methyl donor and reductant in the reaction, yielding dihydrofolate (DHF) as a by-product. This enzymatic reaction provides an intracellular de novo source of dTMP, an essential precursor for DNA biosynthesis. This Salmonella arizonae (strain ATCC BAA-731 / CDC346-86 / RSK2980) protein is Thymidylate synthase.